The chain runs to 129 residues: Small ribosomal subunit protein eS6 (129 aa).

Residues 106-129 form a disordered region; it reads QINASIVSRGEQSIDDLLGGEDDE.

This sequence belongs to the eukaryotic ribosomal protein eS6 family.

In Natronomonas pharaonis (strain ATCC 35678 / DSM 2160 / CIP 103997 / JCM 8858 / NBRC 14720 / NCIMB 2260 / Gabara) (Halobacterium pharaonis), this protein is Small ribosomal subunit protein eS6.